A 236-amino-acid chain; its full sequence is SPbeta prophage-derived uncharacterized lipoprotein YokB (236 aa).

The first 19 residues, 1-19 (MNIRFSMLVCVSFIFFTGG), serve as a signal peptide directing secretion. Cysteine 20 carries N-palmitoyl cysteine lipidation. Cysteine 20 carries S-diacylglycerol cysteine lipidation. 2 disordered regions span residues 23-59 (SSAN…TPNM) and 204-236 (VKKV…KDNK). Residues 31–53 (SKNKNESKEESSEEGVKENDNKL) show a composition bias toward basic and acidic residues.

The protein resides in the cell membrane. In Bacillus subtilis (strain 168), this protein is SPbeta prophage-derived uncharacterized lipoprotein YokB (yokB).